A 152-amino-acid polypeptide reads, in one-letter code: MAPARKGKAKEEQAVVSLGPQAKEGELIFGVAHIFASFNDTFVHITDISGRETIVRVTGGMKVKADRDESSPYAAMLAAQDVADRCKQLGINALHIKLRATGGTRTKTPGPGAQSALRALARAGMKIGRIEDVTPIPSDCTRRKGGRRGRRL.

Belongs to the universal ribosomal protein uS11 family. As to quaternary structure, component of the small ribosomal subunit. Part of the small subunit (SSU) processome, composed of more than 70 proteins and the RNA chaperone small nucleolar RNA (snoRNA) U3.

It is found in the cytoplasm. Its subcellular location is the nucleus. It localises to the nucleolus. Component of the small ribosomal subunit. The ribosome is a large ribonucleoprotein complex responsible for the synthesis of proteins in the cell. Part of the small subunit (SSU) processome, first precursor of the small eukaryotic ribosomal subunit. During the assembly of the SSU processome in the nucleolus, many ribosome biogenesis factors, an RNA chaperone and ribosomal proteins associate with the nascent pre-rRNA and work in concert to generate RNA folding, modifications, rearrangements and cleavage as well as targeted degradation of pre-ribosomal RNA by the RNA exosome. The polypeptide is Small ribosomal subunit protein uS11 (rps-14) (Caenorhabditis elegans).